The chain runs to 448 residues: Probable glycine dehydrogenase (decarboxylating) subunit 1 (448 aa).

The protein belongs to the GcvP family. N-terminal subunit subfamily. In terms of assembly, the glycine cleavage system is composed of four proteins: P, T, L and H. In this organism, the P 'protein' is a heterodimer of two subunits.

The enzyme catalyses N(6)-[(R)-lipoyl]-L-lysyl-[glycine-cleavage complex H protein] + glycine + H(+) = N(6)-[(R)-S(8)-aminomethyldihydrolipoyl]-L-lysyl-[glycine-cleavage complex H protein] + CO2. Its function is as follows. The glycine cleavage system catalyzes the degradation of glycine. The P protein binds the alpha-amino group of glycine through its pyridoxal phosphate cofactor; CO(2) is released and the remaining methylamine moiety is then transferred to the lipoamide cofactor of the H protein. This Shouchella clausii (strain KSM-K16) (Alkalihalobacillus clausii) protein is Probable glycine dehydrogenase (decarboxylating) subunit 1.